The sequence spans 302 residues: MPAVVRGGPPKPRRPRAEAPASPSKGKPAPRKAQPAAKLHAARGVGLSPTVALSVAGAALGLGLVVMLATGHRAERLGASMVRGVDNTFASAGFRLKTVHIRGASATAQADILKASGLYLDQPTLGMDLADVRDRVQGVGWVKDAKVVRMLPDTVLIAVEERPALAVWQNHGRMKVIDSEGQVITEADPARFPQLPLVVGQGADQAAGLILPAVASRPRLRDRLEAMVRVDERRWDLRLKDGSLIQLPAIDEESALIQLDQLDQRQRILDMGFARIDLRDPEMVAVRPRDAVLPGQPAADGA.

The interval 1 to 41 (MPAVVRGGPPKPRRPRAEAPASPSKGKPAPRKAQPAAKLHA) is disordered. Over 1–50 (MPAVVRGGPPKPRRPRAEAPASPSKGKPAPRKAQPAAKLHAARGVGLSPT) the chain is Cytoplasmic. A compositionally biased stretch (low complexity) spans 18-38 (EAPASPSKGKPAPRKAQPAAK). Residues 51 to 71 (VALSVAGAALGLGLVVMLATG) form a helical membrane-spanning segment. Over 72-302 (HRAERLGASM…LPGQPAADGA (231 aa)) the chain is Periplasmic. In terms of domain architecture, POTRA spans 94–162 (FRLKTVHIRG…DTVLIAVEER (69 aa)).

The protein belongs to the FtsQ/DivIB family. FtsQ subfamily.

It localises to the cell inner membrane. Functionally, essential cell division protein. The chain is Cell division protein FtsQ from Caulobacter vibrioides (strain ATCC 19089 / CIP 103742 / CB 15) (Caulobacter crescentus).